We begin with the raw amino-acid sequence, 417 residues long: Histidine--tRNA ligase (417 aa).

The protein belongs to the class-II aminoacyl-tRNA synthetase family. Homodimer.

Its subcellular location is the cytoplasm. The enzyme catalyses tRNA(His) + L-histidine + ATP = L-histidyl-tRNA(His) + AMP + diphosphate + H(+). In Nitratidesulfovibrio vulgaris (strain ATCC 29579 / DSM 644 / CCUG 34227 / NCIMB 8303 / VKM B-1760 / Hildenborough) (Desulfovibrio vulgaris), this protein is Histidine--tRNA ligase.